A 345-amino-acid chain; its full sequence is UDP-N-acetylenolpyruvoylglucosamine reductase (345 aa).

Residues 16 to 186 (LPAYASNVIS…VSVGIKLMKS (171 aa)) enclose the FAD-binding PCMH-type domain. R162 is a catalytic residue. S232 serves as the catalytic Proton donor. E328 is an active-site residue.

It belongs to the MurB family. Requires FAD as cofactor.

Its subcellular location is the cytoplasm. The catalysed reaction is UDP-N-acetyl-alpha-D-muramate + NADP(+) = UDP-N-acetyl-3-O-(1-carboxyvinyl)-alpha-D-glucosamine + NADPH + H(+). The protein operates within cell wall biogenesis; peptidoglycan biosynthesis. Its function is as follows. Cell wall formation. This chain is UDP-N-acetylenolpyruvoylglucosamine reductase, found in Yersinia pestis.